A 311-amino-acid polypeptide reads, in one-letter code: Porphobilinogen deaminase (311 aa).

Cys-241 is modified (S-(dipyrrolylmethanemethyl)cysteine).

The protein belongs to the HMBS family. In terms of assembly, monomer. The cofactor is dipyrromethane.

The catalysed reaction is 4 porphobilinogen + H2O = hydroxymethylbilane + 4 NH4(+). The protein operates within porphyrin-containing compound metabolism; protoporphyrin-IX biosynthesis; coproporphyrinogen-III from 5-aminolevulinate: step 2/4. Tetrapolymerization of the monopyrrole PBG into the hydroxymethylbilane pre-uroporphyrinogen in several discrete steps. The polypeptide is Porphobilinogen deaminase (Geobacillus sp. (strain WCH70)).